A 192-amino-acid chain; its full sequence is Erythropoietin (192 aa).

Positions 1 to 26 (MGVRECPALLLLLSLLLPPLGLPALG) are cleaved as a signal peptide. Disulfide bonds link Cys33–Cys187 and Cys55–Cys59. The N-linked (GlcNAc...) asparagine glycan is linked to Asn50. N-linked (GlcNAc...) asparagine glycosylation is found at Asn64 and Asn109.

It belongs to the EPO/TPO family.

It is found in the secreted. Its function is as follows. Hormone involved in the regulation of erythrocyte proliferation and differentiation and the maintenance of a physiological level of circulating erythrocyte mass. Binds to EPOR leading to EPOR dimerization and JAK2 activation thereby activating specific downstream effectors, including STAT1 and STAT3. The protein is Erythropoietin (EPO) of Equus caballus (Horse).